A 217-amino-acid polypeptide reads, in one-letter code: MITRAELLDMLASNAPQGFEAQALGLVPIVVETSGRGERSYDIYSRLLKERLVFMVGEVNDQTANLVVAQLLFLESENPDKDISLYINSPGGSVSAGMAIYDTMQFIKPDVSTLCMGLAASMGAFLLASGAKGKRFALPNSRVMIHQPLGGARGQASDIEIQAREILYLKERLNQLLAQHTGQDVERIARDTDRDNFMSSEDAKAYGLIDQVLLKRP.

Catalysis depends on S121, which acts as the Nucleophile. H146 is a catalytic residue.

This sequence belongs to the peptidase S14 family. In terms of assembly, fourteen ClpP subunits assemble into 2 heptameric rings which stack back to back to give a disk-like structure with a central cavity, resembling the structure of eukaryotic proteasomes.

It localises to the cytoplasm. It catalyses the reaction Hydrolysis of proteins to small peptides in the presence of ATP and magnesium. alpha-casein is the usual test substrate. In the absence of ATP, only oligopeptides shorter than five residues are hydrolyzed (such as succinyl-Leu-Tyr-|-NHMec, and Leu-Tyr-Leu-|-Tyr-Trp, in which cleavage of the -Tyr-|-Leu- and -Tyr-|-Trp bonds also occurs).. Its function is as follows. Cleaves peptides in various proteins in a process that requires ATP hydrolysis. Has a chymotrypsin-like activity. Plays a major role in the degradation of misfolded proteins. The chain is ATP-dependent Clp protease proteolytic subunit from Burkholderia lata (strain ATCC 17760 / DSM 23089 / LMG 22485 / NCIMB 9086 / R18194 / 383).